Consider the following 81-residue polypeptide: Cytochrome b559 subunit alpha (81 aa).

A helical membrane pass occupies residues 22 to 36 (VIHSITIPSLFIAGW). Histidine 24 provides a ligand contact to heme.

This sequence belongs to the PsbE/PsbF family. In terms of assembly, heterodimer of an alpha subunit and a beta subunit. PSII is composed of 1 copy each of membrane proteins PsbA, PsbB, PsbC, PsbD, PsbE, PsbF, PsbH, PsbI, PsbJ, PsbK, PsbL, PsbM, PsbT, PsbX, PsbY, PsbZ, Psb30/Ycf12, at least 3 peripheral proteins of the oxygen-evolving complex and a large number of cofactors. It forms dimeric complexes. Heme b serves as cofactor.

It is found in the plastid. The protein localises to the chloroplast thylakoid membrane. Its function is as follows. This b-type cytochrome is tightly associated with the reaction center of photosystem II (PSII). PSII is a light-driven water:plastoquinone oxidoreductase that uses light energy to abstract electrons from H(2)O, generating O(2) and a proton gradient subsequently used for ATP formation. It consists of a core antenna complex that captures photons, and an electron transfer chain that converts photonic excitation into a charge separation. The polypeptide is Cytochrome b559 subunit alpha (Cyanidioschyzon merolae (strain NIES-3377 / 10D) (Unicellular red alga)).